Consider the following 254-residue polypeptide: MLLVMDMGNSHIHIGVFDGDIIVSQIRYATSSVDSTSDQMGVFLRQALRENSVDLGKIDGYGISSVVPHLNYSLGSAVIKYFNIKPFFISMDTTDLDMSAVEAHQVGADRIASCISAIADHPNKDLLIIDLGTATTFDLVTKDKKYLSGSIMPGVKLSLNALCQGASQLSSVTIVKPEVAIGYDTKTNIRSGLYYGHLGALRRSVEEFGSPVYTIATGGFAGLFKEEDIFNEISPDLILRGIRIAFLENNKKGV.

6–13 (DMGNSHIH) provides a ligand contact to ATP. Residue 107-110 (GADR) participates in substrate binding. Catalysis depends on aspartate 109, which acts as the Proton acceptor. Aspartate 130 contributes to the K(+) binding site. Threonine 133 lines the ATP pocket. Substrate is bound at residue threonine 185.

The protein belongs to the type III pantothenate kinase family. As to quaternary structure, homodimer. NH4(+) serves as cofactor. Requires K(+) as cofactor.

The protein resides in the cytoplasm. The catalysed reaction is (R)-pantothenate + ATP = (R)-4'-phosphopantothenate + ADP + H(+). It participates in cofactor biosynthesis; coenzyme A biosynthesis; CoA from (R)-pantothenate: step 1/5. Its function is as follows. Catalyzes the phosphorylation of pantothenate (Pan), the first step in CoA biosynthesis. The protein is Type III pantothenate kinase 2 of Francisella tularensis subsp. holarctica (strain LVS).